A 182-amino-acid polypeptide reads, in one-letter code: Peptide deformylase (182 aa).

The Fe cation site is built by C110 and H153. E154 is a catalytic residue. H157 contacts Fe cation.

The protein belongs to the polypeptide deformylase family. Fe(2+) is required as a cofactor.

It catalyses the reaction N-terminal N-formyl-L-methionyl-[peptide] + H2O = N-terminal L-methionyl-[peptide] + formate. Its function is as follows. Removes the formyl group from the N-terminal Met of newly synthesized proteins. Requires at least a dipeptide for an efficient rate of reaction. N-terminal L-methionine is a prerequisite for activity but the enzyme has broad specificity at other positions. The protein is Peptide deformylase of Halalkalibacterium halodurans (strain ATCC BAA-125 / DSM 18197 / FERM 7344 / JCM 9153 / C-125) (Bacillus halodurans).